The following is a 359-amino-acid chain: Lachesin (359 aa).

A signal peptide spans 1-25; sequence MWRPSISNCVWSTLLLAIFVQQTLA. The 102-residue stretch at 29–130 folds into the Ig-like V-type domain; that stretch reads PTISYITQEQ…HKVSAEVKLS (102 aa). A disulfide bridge links Cys-50 with Cys-113. N-linked (GlcNAc...) asparagine glycosylation is found at Asn-92 and Asn-140. Ig-like C2-type domains lie at 135-221 and 226-317; these read PVIS…INVE and PVIT…ARVN. Intrachain disulfides connect Cys-157/Cys-204 and Cys-247/Cys-303. Ala-336 is lipidated: GPI-anchor amidated alanine. Residues 337-359 constitute a propeptide, removed in mature form; the sequence is GAEDVSATSFALVGILAALLFAR.

In terms of tissue distribution, expressed on differentiating neuronal cells from the onset of neurogenesis in both the central and peripheral nervous systems. First detected in the cellularized blastoderm, apart from in the ventral side. Expression persists uniformly in the early ectoderm until the end of gastrulation. From stage 10, expressed in an alternating strong/weak pattern in each segment until stage 15 when it disappears. From stage 11, expressed in subsets of neurons and later subsets of glial cells. From early stage 13, strongly expressed in trachea, hindgut, foregut and the nervous system.

Its subcellular location is the cell membrane. Required for normal tracheal development and maintenance of the trans-epithelial diffusion barrier. Functions as a homophilic cell-adhesion molecule. May play a role in early neuronal differentiation and axon outgrowth. The sequence is that of Lachesin (Lac) from Drosophila melanogaster (Fruit fly).